The following is a 1037-amino-acid chain: MDRARPGRRRASSEIVTEGKRKKSSPADLQKITKLLTVKSEDVLAQSPLPKLRGSECWWTRSLRNKVICLDHKTTKAAHGCPPKALPKRHLKVMLTNVLWTDLGREFRKTLPRNDAKLCDTSKVQSDSLPSTSVDSIETCQRLDPLHQSLNLSERIPRVILTDIRQTELGRKYLKIPSVTEASLSDTASPKSEELSSSADGSLESCQNVNHLKSFLSERGSKPSRTGDISAKEAANGRQEQGDDGDIAPEMVTPQSKDFNSGNKGDYHEEGTSNKNTSYSHSETDHTPVSRKRKKRGRSNFHNSHNPKSSVDKSTEYIKEEENESTVSSKLEESNEDSHQDPAPPEGLTPDSLETEATNVCSFVVQEPDVSAASGRACSPNKSSESSVSSEVAENSSAAEKGEASTVKEAPPPGGNSEENQLLMSAEPIVVSSDEEGPVEHKNSVILKLQPSQDYEFMSENQTTSDPQLSELMLGACESVQVSSELCPYNPDMENISCINPNSEMDLKLDFIFTCVYIGKIKGTSKGCITFTKKYIKIPFQVSMNEISLTVDTARLKRFGLWESKDDDHSKRSHAILFLWVSSNYLQDIQTQLENPMLSQQSKANEFIFLELNSPISQREELKLKDIMMEIGATNGELQLSCPLPWVQAFPLFQDLSPQEISFLHYYCASASSFPAVAGADMKKKPVSQPSNADVVKPTYTFLHKQSSGCYSLSITSSPDEEWREVRNTGPVQKLIVYPPPPTKGGLGVTNEDLECLEEGEFLNDVIIDFYLKYLLLEKASDELVERSHIFSSFFYKCLTRKENNLTEDNPDLSVAQRRHRRVRTWTRHINIFNKDYIFVPVNESSHWYLAVICFPWLEEAVYEDFPQTVSQEFQDQQSQHDNKTIDNDPHTTSTVFTSAEESQSTETSMSVPKKMCKRPCILILDSLKAASIQNTVQNLREYLEVEWEVKRKTHREFSKTNMVDLCPKVPKQDNSSDCGVYLLQYVESFFQDPIVNFELPIHLEKWFPRHVIKTKREDIRELILKLHLQQQKGSSS.

Over residues 1-10 the composition is skewed to basic residues; it reads MDRARPGRRR. 2 disordered regions span residues 1–28 and 182–420; these read MDRA…SPAD and ASLS…SEEN. A phosphoserine mark is found at Ser12, Ser13, Ser25, and Ser189. Polar residues-rich tracts occupy residues 182 to 211 and 253 to 263; these read ASLS…NVNH and TPQSKDFNSGN. A compositionally biased stretch (basic residues) spans 289–299; it reads VSRKRKKRGRS. The span at 300–309 shows a compositional bias: polar residues; it reads NFHNSHNPKS. 2 stretches are compositionally biased toward basic and acidic residues: residues 310 to 320 and 330 to 340; these read SVDKSTEYIKE and KLEESNEDSHQ. Low complexity predominate over residues 381–399; it reads NKSSESSVSSEVAENSSAA. 2 positions are modified to phosphoserine: Ser432 and Ser433. The segment at 747–1037 is protease; that stretch reads LGVTNEDLEC…HLQQQKGSSS (291 aa). Residue His847 is part of the active site. Residues 873 to 910 are disordered; it reads EFQDQQSQHDNKTIDNDPHTTSTVFTSAEESQSTETSM. Residues 879 to 890 are compositionally biased toward basic and acidic residues; that stretch reads SQHDNKTIDNDP. Over residues 898-910 the composition is skewed to low complexity; it reads TSAEESQSTETSM. Asp926 is an active-site residue. The Nucleophile role is filled by Cys979.

It belongs to the peptidase C48 family.

The protein resides in the cytoplasm. Protease that acts as a positive regulator of the cGAS-STING pathway by catalyzing desumoylation of CGAS. Desumoylation of CGAS promotes DNA-binding activity of CGAS, subsequent oligomerization and activation. Deconjugates SUMO2 and SUMO3 from targeted proteins, but not SUMO1. Catalyzes the deconjugation of poly-SUMO2 and poly-SUMO3 chains. Has very low efficiency in processing full-length SUMO proteins to their mature forms. This Rattus norvegicus (Rat) protein is Sentrin-specific protease 7 (Senp7).